The sequence spans 280 residues: Large ribosomal subunit protein uL2 (280 aa).

Disordered stretches follow at residues Met-1–Met-20, Pro-29–His-58, and Val-225–Arg-280. Over residues Ser-45 to His-58 the composition is skewed to basic residues. Positions Lys-253–Val-269 are enriched in basic and acidic residues. Over residues Arg-270–Arg-280 the composition is skewed to basic residues.

This sequence belongs to the universal ribosomal protein uL2 family. As to quaternary structure, part of the 50S ribosomal subunit. Forms a bridge to the 30S subunit in the 70S ribosome.

Functionally, one of the primary rRNA binding proteins. Required for association of the 30S and 50S subunits to form the 70S ribosome, for tRNA binding and peptide bond formation. It has been suggested to have peptidyltransferase activity; this is somewhat controversial. Makes several contacts with the 16S rRNA in the 70S ribosome. The protein is Large ribosomal subunit protein uL2 of Corynebacterium efficiens (strain DSM 44549 / YS-314 / AJ 12310 / JCM 11189 / NBRC 100395).